The primary structure comprises 230 residues: Broad-specificity phosphatase YOR283W (230 aa).

The active-site Tele-phosphohistidine intermediate is the His-24. Substrate contacts are provided by residues 36–37 (QG) and 102–105 (ERYM). Glu-102 functions as the Proton donor/acceptor in the catalytic mechanism.

It belongs to the phosphoglycerate mutase family. BPG-dependent PGAM subfamily.

The protein resides in the cytoplasm. It localises to the nucleus. Its function is as follows. Metal-independent phosphatase active against a broad range of phosphorylated substrates including nucleoside tri- and diphosphates, phosphorylated organic acids, and amino acids. Shows no activity against phytic acid, phosphorylated carbohydrates, and nucleoside monophosphates. The polypeptide is Broad-specificity phosphatase YOR283W (Saccharomyces cerevisiae (strain ATCC 204508 / S288c) (Baker's yeast)).